The following is a 350-amino-acid chain: S-adenosylmethionine:tRNA ribosyltransferase-isomerase (350 aa).

Belongs to the QueA family. As to quaternary structure, monomer.

It localises to the cytoplasm. The catalysed reaction is 7-aminomethyl-7-carbaguanosine(34) in tRNA + S-adenosyl-L-methionine = epoxyqueuosine(34) in tRNA + adenine + L-methionine + 2 H(+). It participates in tRNA modification; tRNA-queuosine biosynthesis. Transfers and isomerizes the ribose moiety from AdoMet to the 7-aminomethyl group of 7-deazaguanine (preQ1-tRNA) to give epoxyqueuosine (oQ-tRNA). The sequence is that of S-adenosylmethionine:tRNA ribosyltransferase-isomerase from Bacillus cereus (strain 03BB102).